A 204-amino-acid chain; its full sequence is Large ribosomal subunit protein uL4 (204 aa).

The disordered stretch occupies residues 56–79 (VSGTTAKPYGQKRTGRARQGSLRS).

It belongs to the universal ribosomal protein uL4 family. In terms of assembly, part of the 50S ribosomal subunit.

Functionally, one of the primary rRNA binding proteins, this protein initially binds near the 5'-end of the 23S rRNA. It is important during the early stages of 50S assembly. It makes multiple contacts with different domains of the 23S rRNA in the assembled 50S subunit and ribosome. Forms part of the polypeptide exit tunnel. This chain is Large ribosomal subunit protein uL4, found in Wolbachia pipientis subsp. Culex pipiens (strain wPip).